We begin with the raw amino-acid sequence, 275 residues long: Replication protein A 32 kDa subunit (275 aa).

The disordered stretch occupies residues 23 to 47; it reads MQSPGGFGSPAPTQGEKKSRSRSQQ. The OB DNA-binding region spans 76–150; the sequence is VTIVGIVRHA…KSVVAFKIAP (75 aa).

Belongs to the replication factor A protein 2 family. In terms of assembly, component of the replication protein A complex (RPA/RP-A), a heterotrimeric complex composed of RPA1, RPA2 and RPA3. In terms of processing, differentially phosphorylated throughout the cell cycle, becoming phosphorylated at the G1-S transition and dephosphorylated in late mitosis. Phosphorylation increases upon replication fork stalling.

It is found in the nucleus. It localises to the PML body. Functionally, as part of the heterotrimeric replication protein A complex (RPA/RP-A), binds and stabilizes single-stranded DNA intermediates, that form during DNA replication or upon DNA stress. It prevents their reannealing and in parallel, recruits and activates different proteins and complexes involved in DNA metabolism. Thereby, it plays an essential role both in DNA replication and the cellular response to DNA damage. The polypeptide is Replication protein A 32 kDa subunit (rpa2) (Xenopus tropicalis (Western clawed frog)).